The following is a 127-amino-acid chain: Riboflavin kinase (127 aa).

Position 10–15 (10–15) interacts with CDP; the sequence is GLGEGK. Positions 39 and 41 each coordinate Mg(2+). FMN-binding residues include Thr96 and Glu104. 109 to 112 is a binding site for CDP; it reads IQLR.

This sequence belongs to the archaeal riboflavin kinase family. Mg(2+) is required as a cofactor.

The enzyme catalyses riboflavin + CTP = CDP + FMN + H(+). The protein operates within cofactor biosynthesis; FMN biosynthesis; FMN from riboflavin (CTP route): step 1/1. In terms of biological role, catalyzes the CTP-dependent phosphorylation of riboflavin (vitamin B2) to form flavin mononucleotide (FMN). This is Riboflavin kinase from Methanococcus maripaludis (strain DSM 14266 / JCM 13030 / NBRC 101832 / S2 / LL).